The primary structure comprises 498 residues: Probable malate:quinone oxidoreductase (498 aa).

It belongs to the MQO family. The cofactor is FAD.

The catalysed reaction is (S)-malate + a quinone = a quinol + oxaloacetate. Its pathway is carbohydrate metabolism; tricarboxylic acid cycle; oxaloacetate from (S)-malate (quinone route): step 1/1. In Granulibacter bethesdensis (strain ATCC BAA-1260 / CGDNIH1), this protein is Probable malate:quinone oxidoreductase.